The following is a 334-amino-acid chain: Glycerol-3-phosphate dehydrogenase [NAD(P)+] (334 aa).

Trp13, Arg33, and Lys106 together coordinate NADPH. Lys106, Gly137, and Ser139 together coordinate sn-glycerol 3-phosphate. Position 141 (Ala141) interacts with NADPH. Sn-glycerol 3-phosphate contacts are provided by Lys192, Asp245, Ser255, Arg256, and Asn257. Lys192 functions as the Proton acceptor in the catalytic mechanism. An NADPH-binding site is contributed by Arg256. Val280 and Glu282 together coordinate NADPH.

This sequence belongs to the NAD-dependent glycerol-3-phosphate dehydrogenase family.

It localises to the cytoplasm. The catalysed reaction is sn-glycerol 3-phosphate + NAD(+) = dihydroxyacetone phosphate + NADH + H(+). The enzyme catalyses sn-glycerol 3-phosphate + NADP(+) = dihydroxyacetone phosphate + NADPH + H(+). It functions in the pathway membrane lipid metabolism; glycerophospholipid metabolism. In terms of biological role, catalyzes the reduction of the glycolytic intermediate dihydroxyacetone phosphate (DHAP) to sn-glycerol 3-phosphate (G3P), the key precursor for phospholipid synthesis. This is Glycerol-3-phosphate dehydrogenase [NAD(P)+] from Chlamydia felis (strain Fe/C-56) (Chlamydophila felis).